Here is a 219-residue protein sequence, read N- to C-terminus: Poxin (219 aa).

Residue His-17 is the Proton donor of the active site. Tyr-138 serves as the catalytic Shared with catalytic histidine of dimeric partner. Residue Lys-142 is the Proton acceptor; shared with catalytic histidine of dimeric partner of the active site.

This sequence belongs to the poxin family. As to quaternary structure, homodimer.

It catalyses the reaction 2',3'-cGAMP + H2O = Gp(2'-5')Ap(3') + H(+). Nuclease that is responsible for viral evasion of host cGAS-STING innate immunity. Cleaves 2',3'-cGAMP which is produced by host cGAS following recognition of cytosolic DNA and blocks the subsequent 2',3'-cGAMP-mediated activation of TMEM173/STING, which normally spreads to adjacent cells and activates the interferon and NF-kappa-B immune responses. In Homo sapiens (Human), this protein is Poxin (OPG188).